We begin with the raw amino-acid sequence, 306 residues long: UDP-3-O-acyl-N-acetylglucosamine deacetylase (306 aa).

3 residues coordinate Zn(2+): H79, H239, and D243. The active-site Proton donor is H266.

Belongs to the LpxC family. Zn(2+) is required as a cofactor.

The catalysed reaction is a UDP-3-O-[(3R)-3-hydroxyacyl]-N-acetyl-alpha-D-glucosamine + H2O = a UDP-3-O-[(3R)-3-hydroxyacyl]-alpha-D-glucosamine + acetate. The protein operates within glycolipid biosynthesis; lipid IV(A) biosynthesis; lipid IV(A) from (3R)-3-hydroxytetradecanoyl-[acyl-carrier-protein] and UDP-N-acetyl-alpha-D-glucosamine: step 2/6. Its function is as follows. Catalyzes the hydrolysis of UDP-3-O-myristoyl-N-acetylglucosamine to form UDP-3-O-myristoylglucosamine and acetate, the committed step in lipid A biosynthesis. The sequence is that of UDP-3-O-acyl-N-acetylglucosamine deacetylase from Glaesserella parasuis serovar 5 (strain SH0165) (Haemophilus parasuis).